Consider the following 64-residue polypeptide: UPF0370 protein YPA_2246 (64 aa).

The chain crosses the membrane as a helical span at residues 3–23 (WLADYWWIILILLVGMILNGI). The segment covering 36-47 (DNKPELPPHRDN) has biased composition (basic and acidic residues). The interval 36–64 (DNKPELPPHRDNNAQWDDEDDWPDQNKKK) is disordered.

Belongs to the UPF0370 family.

It localises to the cell membrane. The protein is UPF0370 protein YPA_2246 of Yersinia pestis bv. Antiqua (strain Antiqua).